A 302-amino-acid chain; its full sequence is Ornithine carbamoyltransferase (302 aa).

Carbamoyl phosphate is bound by residues 52 to 55 (STRT), glutamine 79, arginine 103, and 130 to 133 (HPCQ). L-ornithine contacts are provided by residues asparagine 161, aspartate 222, and 226–227 (SM). Carbamoyl phosphate is bound by residues 262-263 (CL) and arginine 290.

Belongs to the aspartate/ornithine carbamoyltransferase superfamily. OTCase family.

The protein resides in the cytoplasm. The enzyme catalyses carbamoyl phosphate + L-ornithine = L-citrulline + phosphate + H(+). It functions in the pathway amino-acid biosynthesis; L-arginine biosynthesis; L-arginine from L-ornithine and carbamoyl phosphate: step 1/3. Its function is as follows. Reversibly catalyzes the transfer of the carbamoyl group from carbamoyl phosphate (CP) to the N(epsilon) atom of ornithine (ORN) to produce L-citrulline. This is Ornithine carbamoyltransferase from Syntrophus aciditrophicus (strain SB).